Here is a 355-residue protein sequence, read N- to C-terminus: MVDAATLEKLEAGFSKLAASDSKSLLKKYLTREVFDALKNKKTSFGSTLLDSIQSGVENLHSGVGIYAPDAEAYVVFADLFDPIIEDYHNGFKKTDKHPPKNWGDVETLGNLDPAGEFVVSTRVRCGRSMEGYPFNPCLTEAQYKEMEEKVSSTLSGLEGELKGTFFPLTGMSKETQQQLIDDHFLFKEGDRFLQAANACRFWPSGRGIYHNENKTFLVWCNEEDHLRLISMQMGGDLKQVYKRLVRGVNDIAKRIPFSHNERLGFLTFCPTNLGTTVRASVHIKLPKLAADKAKLEEVASKYHLQVRGTRGEHTEAEGGVYDISNKRRMGLTEYEAVKEMYDGIAELIKIEKSL.

A Phosphagen kinase N-terminal domain is found at 6–90 (TLEKLEAGFS…FDPIIEDYHN (85 aa)). 63–67 (GVGIY) provides a ligand contact to substrate. The Phosphagen kinase C-terminal domain occupies 118-355 (FVVSTRVRCG…AELIKIEKSL (238 aa)). ATP is bound by residues 121-125 (STRVR) and H184. Residue E224 participates in substrate binding. Position 228 (R228) interacts with ATP. Substrate is bound at residue C270. Residues 279 to 283 (RASVH) and 308 to 313 (RGTRGE) contribute to the ATP site. Residue E313 participates in substrate binding.

Belongs to the ATP:guanido phosphotransferase family.

The enzyme catalyses L-arginine + ATP = N(omega)-phospho-L-arginine + ADP + H(+). This chain is Arginine kinase (ARGK), found in Plodia interpunctella (Indianmeal moth).